Consider the following 269-residue polypeptide: Hydroxyethylthiazole kinase (269 aa).

Residue methionine 45 coordinates substrate. Arginine 121 and threonine 167 together coordinate ATP. A substrate-binding site is contributed by glycine 194.

Belongs to the Thz kinase family. Mg(2+) serves as cofactor.

It carries out the reaction 5-(2-hydroxyethyl)-4-methylthiazole + ATP = 4-methyl-5-(2-phosphooxyethyl)-thiazole + ADP + H(+). It participates in cofactor biosynthesis; thiamine diphosphate biosynthesis; 4-methyl-5-(2-phosphoethyl)-thiazole from 5-(2-hydroxyethyl)-4-methylthiazole: step 1/1. Catalyzes the phosphorylation of the hydroxyl group of 4-methyl-5-beta-hydroxyethylthiazole (THZ). In Brevibacillus brevis (strain 47 / JCM 6285 / NBRC 100599), this protein is Hydroxyethylthiazole kinase.